Reading from the N-terminus, the 208-residue chain is Thymidylate kinase (208 aa).

Position 7–14 (7–14 (GIDGSGKS)) interacts with ATP.

This sequence belongs to the thymidylate kinase family.

The catalysed reaction is dTMP + ATP = dTDP + ADP. Its function is as follows. Phosphorylation of dTMP to form dTDP in both de novo and salvage pathways of dTTP synthesis. This chain is Thymidylate kinase, found in Kosmotoga olearia (strain ATCC BAA-1733 / DSM 21960 / TBF 19.5.1).